The sequence spans 133 residues: Sigma factor-binding protein Crl (133 aa).

Positions 99-122 (TLDDFYVKLTKFVKEDCQLDLQAS) are essential for activity.

Belongs to the Crl family.

It is found in the cytoplasm. Binds to the sigma-S subunit of RNA polymerase, activating expression of sigma-S-regulated genes. Stimulates RNA polymerase holoenzyme formation and may bind to several other sigma factors, such as sigma-70 and sigma-32. This is Sigma factor-binding protein Crl from Photobacterium profundum (strain SS9).